Consider the following 495-residue polypeptide: Regulator of G-protein signaling 7 (495 aa).

Positions 37 to 112 constitute a DEP domain; sequence EKNGIPIRTV…DDGTFYRFQT (76 aa). 2 positions are modified to phosphoserine: Ser229 and Ser241. The interval 235–256 is disordered; it reads NDIRSHSPTHTPTPETKPPTED. Thr243 is modified (phosphothreonine). The region spanning 255–316 is the G protein gamma domain; it reads EDELQQQIKY…LSDDTTFWEL (62 aa). The region spanning 333 to 448 is the RGS domain; it reads GMDEALKDPV…IRSSAYQELL (116 aa). The residue at position 434 (Ser434) is a Phosphoserine.

In terms of assembly, interacts with GNB5, forming the RGS7-GNB5 complex. Interacts with GPR158; promotes the GTPase activator activity of the RGS7-GNB5 complex in absence of glycine, in contrast GTPase activator activity of the RGS7-GNB5 complex is inhibited in presence of glycine. Interacts with GPR179. Interacts with PKD1; this prevents rapid proteasomal degradation. Interacts with RGS7BP, leading to regulate the subcellular location of the heterodimer formed with GNB5. Interacts (phosphorylated form) with 14-3-3 protein YWHAQ. Interacts with SNAPIN. Interacts with GNAI1. Interacts with GNAO1, GNAI3 and GNAZ. Post-translationally, palmitoylated. In terms of processing, ubiquitinated, leading to rapid proteasomal degradation. Phosphorylation and subsequent interaction with 14-3-3 proteins inhibits GAP activity.

The protein localises to the cytoplasm. It is found in the cytosol. The protein resides in the cell membrane. Its subcellular location is the membrane. Functionally, GTPase activator component of the RGS7-GNB5 complex that regulates G protein-coupled receptor signaling cascades. The RGS7-GNB5 complex acts as an inhibitor signal transduction by promoting the GTPase activity of G protein alpha subunits, such as GNAO1, thereby driving them into their inactive GDP-bound form. May play a role in synaptic vesicle exocytosis. Glycine-dependent regulation of the RGS7-GNB5 complex by GPR158 affects mood and cognition via its ability to regulate neuronal excitability in L2/L3 pyramidal neurons of the prefrontal cortex. Modulates the activity of potassium channels that are activated by GNAO1 in response to muscarinic acetylcholine receptor M2/CHRM2 signaling. The protein is Regulator of G-protein signaling 7 (RGS7) of Homo sapiens (Human).